The sequence spans 414 residues: Serine/threonine transporter SstT (414 aa).

9 consecutive transmembrane segments (helical) span residues I19–V39, F55–I75, I89–F109, A148–L168, I189–L209, L223–V243, I297–L317, L323–A343, and L363–V383.

It belongs to the dicarboxylate/amino acid:cation symporter (DAACS) (TC 2.A.23) family.

The protein resides in the cell inner membrane. The catalysed reaction is L-serine(in) + Na(+)(in) = L-serine(out) + Na(+)(out). The enzyme catalyses L-threonine(in) + Na(+)(in) = L-threonine(out) + Na(+)(out). In terms of biological role, involved in the import of serine and threonine into the cell, with the concomitant import of sodium (symport system). The polypeptide is Serine/threonine transporter SstT (Actinobacillus succinogenes (strain ATCC 55618 / DSM 22257 / CCUG 43843 / 130Z)).